Reading from the N-terminus, the 155-residue chain is Small ribosomal subunit protein uS7c (155 aa).

It belongs to the universal ribosomal protein uS7 family. In terms of assembly, part of the 30S ribosomal subunit.

The protein resides in the plastid. It is found in the chloroplast. Its function is as follows. One of the primary rRNA binding proteins, it binds directly to 16S rRNA where it nucleates assembly of the head domain of the 30S subunit. The polypeptide is Small ribosomal subunit protein uS7c (rps7) (Ananas comosus (Pineapple)).